A 337-amino-acid polypeptide reads, in one-letter code: Fructose-1,6-bisphosphatase class 1 (337 aa).

Positions 94, 116, 118, and 119 each coordinate Mg(2+). Residues 119–122 (DGSS), Asn-210, and Lys-276 each bind substrate. A Mg(2+)-binding site is contributed by Glu-282.

The protein belongs to the FBPase class 1 family. In terms of assembly, homotetramer. Requires Mg(2+) as cofactor.

Its subcellular location is the cytoplasm. It catalyses the reaction beta-D-fructose 1,6-bisphosphate + H2O = beta-D-fructose 6-phosphate + phosphate. Its pathway is carbohydrate biosynthesis; gluconeogenesis. The polypeptide is Fructose-1,6-bisphosphatase class 1 (Burkholderia lata (strain ATCC 17760 / DSM 23089 / LMG 22485 / NCIMB 9086 / R18194 / 383)).